The primary structure comprises 124 residues: Large ribosomal subunit protein eL33 (124 aa).

Alanine 2 carries the N-acetylalanine modification.

It belongs to the eukaryotic ribosomal protein eL33 family.

This chain is Large ribosomal subunit protein eL33, found in Caenorhabditis elegans.